The sequence spans 336 residues: DNA-directed RNA polymerase subunit alpha (336 aa).

Residues 1 to 235 (MIEFVIPKKL…HFKIVTEGLP (235 aa)) are alpha N-terminal domain (alpha-NTD). The segment at 264–336 (RENSDVYNRK…KFGLELRKGE (73 aa)) is alpha C-terminal domain (alpha-CTD).

Belongs to the RNA polymerase alpha chain family. In terms of assembly, homodimer. The RNAP catalytic core consists of 2 alpha, 1 beta, 1 beta' and 1 omega subunit. When a sigma factor is associated with the core the holoenzyme is formed, which can initiate transcription.

It catalyses the reaction RNA(n) + a ribonucleoside 5'-triphosphate = RNA(n+1) + diphosphate. Functionally, DNA-dependent RNA polymerase catalyzes the transcription of DNA into RNA using the four ribonucleoside triphosphates as substrates. The chain is DNA-directed RNA polymerase subunit alpha from Thermotoga maritima (strain ATCC 43589 / DSM 3109 / JCM 10099 / NBRC 100826 / MSB8).